We begin with the raw amino-acid sequence, 258 residues long: MVLIRVLANLLILQLSYAQKSSELVVGGDECNINEHRSLVAIFNSTGFFCSGTLINQEWVVTAAHCDSNNFKMKFGAHSQKVLNEDEQIRNPKEKFICPNKKNNEVLDKDIMLIKLDSSVSNSEHIAPLSLPSSPPSVGSVCRIMGWGSITPTKVTYPDVPYCANINLLDDAECKPGYPELLPEYRTLCAGIVQGGKDTCGGDSGGPLICNGQFHGIVSYGAHPCGQSLKPGIYTTVFDYNDWIKSIIAGNTAATCPP.

The signal sequence occupies residues 1 to 18; that stretch reads MVLIRVLANLLILQLSYA. The propeptide occupies 19 to 24; the sequence is QKSSEL. A Peptidase S1 domain is found at 25–249; sequence VVGGDECNIN…YNDWIKSIIA (225 aa). 6 disulfides stabilise this stretch: C31–C163, C50–C66, C98–C256, C142–C210, C174–C189, and C200–C225. The N-linked (GlcNAc...) asparagine glycan is linked to N44. Residues H65 and D110 each act as charge relay system in the active site. S204 functions as the Charge relay system in the catalytic mechanism.

The protein belongs to the peptidase S1 family. Snake venom subfamily. As to quaternary structure, monomer. In terms of tissue distribution, expressed by the venom gland.

It is found in the secreted. In terms of biological role, snake venom serine protease that may act in the hemostasis system of the prey. The polypeptide is Snake venom serine protease 1 (TLG1) (Craspedocephalus gramineus (Bamboo pit viper)).